Reading from the N-terminus, the 279-residue chain is Thymidylate synthase (279 aa).

133-134 (RR) contacts dUMP. Cys-154 serves as the catalytic Nucleophile. DUMP contacts are provided by residues 178-181 (RSND), Asn-189, and 219-221 (HIY). Residue Asp-181 coordinates (6R)-5,10-methylene-5,6,7,8-tetrahydrofolate. Ala-278 contacts (6R)-5,10-methylene-5,6,7,8-tetrahydrofolate.

It belongs to the thymidylate synthase family. Bacterial-type ThyA subfamily. Homodimer.

It is found in the cytoplasm. It carries out the reaction dUMP + (6R)-5,10-methylene-5,6,7,8-tetrahydrofolate = 7,8-dihydrofolate + dTMP. It participates in pyrimidine metabolism; dTTP biosynthesis. Functionally, catalyzes the reductive methylation of 2'-deoxyuridine-5'-monophosphate (dUMP) to 2'-deoxythymidine-5'-monophosphate (dTMP) while utilizing 5,10-methylenetetrahydrofolate (mTHF) as the methyl donor and reductant in the reaction, yielding dihydrofolate (DHF) as a by-product. This enzymatic reaction provides an intracellular de novo source of dTMP, an essential precursor for DNA biosynthesis. In Streptococcus pyogenes serotype M6 (strain ATCC BAA-946 / MGAS10394), this protein is Thymidylate synthase.